Consider the following 189-residue polypeptide: Prostaglandin-H2 D-isomerase (189 aa).

The first 24 residues, 1–24 (MATPSSLWLGLALLGTLGVLQTPA), serve as a signal peptide directing secretion. Q25 carries the post-translational modification Pyrrolidone carboxylic acid. N49 is a glycosylation site (N-linked (GlcNAc...) asparagine). Catalysis depends on C63, which acts as the Nucleophile. N76 carries an N-linked (GlcNAc...) asparagine glycan. C87 and C184 are disulfide-bonded.

It belongs to the calycin superfamily. Lipocalin family. In terms of assembly, monomer. Abundant in the brain and CNS, where it is expressed in tissues of the blood-brain barrier and secreted into the cerebro-spinal fluid.

Its subcellular location is the rough endoplasmic reticulum. It is found in the nucleus membrane. The protein resides in the golgi apparatus. It localises to the cytoplasm. The protein localises to the perinuclear region. Its subcellular location is the secreted. It catalyses the reaction prostaglandin H2 = prostaglandin D2. Functionally, catalyzes the conversion of PGH2 to PGD2, a prostaglandin involved in smooth muscle contraction/relaxation and a potent inhibitor of platelet aggregation. Involved in a variety of CNS functions, such as sedation, NREM sleep and PGE2-induced allodynia, and may have an anti-apoptotic role in oligodendrocytes. Binds small non-substrate lipophilic molecules, including biliverdin, bilirubin, retinal, retinoic acid and thyroid hormone, and may act as a scavenger for harmful hydrophobic molecules and as a secretory retinoid and thyroid hormone transporter. Possibly involved in development and maintenance of the blood-brain, blood-retina, blood-aqueous humor and blood-testis barrier. It is likely to play important roles in both maturation and maintenance of the central nervous system and male reproductive system. Involved in PLA2G3-dependent maturation of mast cells. PLA2G3 is secreted by immature mast cells and acts on nearby fibroblasts upstream to PTDGS to synthesize PGD2, which in turn promotes mast cell maturation and degranulation via PTGDR. The sequence is that of Prostaglandin-H2 D-isomerase (PTGDS) from Sus scrofa (Pig).